The sequence spans 339 residues: Phenylalanine--tRNA ligase alpha subunit (339 aa).

Position 254 (Glu-254) interacts with Mg(2+).

It belongs to the class-II aminoacyl-tRNA synthetase family. Phe-tRNA synthetase alpha subunit type 1 subfamily. In terms of assembly, tetramer of two alpha and two beta subunits. Requires Mg(2+) as cofactor.

Its subcellular location is the cytoplasm. The enzyme catalyses tRNA(Phe) + L-phenylalanine + ATP = L-phenylalanyl-tRNA(Phe) + AMP + diphosphate + H(+). The chain is Phenylalanine--tRNA ligase alpha subunit from Acetivibrio thermocellus (strain ATCC 27405 / DSM 1237 / JCM 9322 / NBRC 103400 / NCIMB 10682 / NRRL B-4536 / VPI 7372) (Clostridium thermocellum).